The primary structure comprises 127 residues: MVQSMTSVVKAANFILARPTLSKIITPLAQKFTAYAGYREMGLKFNDLLLEETPIMQTAIKRLPSELNYSRNFRILTAHQLALSHQLLPAEKAVKPEEDDNYLIPYILEAEKEAFEKAELDNIEVKA.

It belongs to the UQCRB/QCR7 family. Component of the ubiquinol-cytochrome c oxidoreductase (cytochrome b-c1 complex, complex III, CIII), a multisubunit enzyme composed of 10 subunits. The complex is composed of 3 respiratory subunits cytochrome b (COB), cytochrome c1 (CYT1) and Rieske protein (RIP1), 2 core protein subunits COR1 and QCR2, and 5 low-molecular weight protein subunits QCR6, QCR7, QCR8, QCR9 and QCR10. The complex exists as an obligatory dimer and forms supercomplexes (SCs) in the inner mitochondrial membrane with a monomer or a dimer of cytochrome c oxidase (complex IV, CIV), resulting in 2 different assemblies (supercomplexes III(2)IV and III(2)IV(2)).

Its subcellular location is the mitochondrion inner membrane. In terms of biological role, component of the ubiquinol-cytochrome c oxidoreductase, a multisubunit transmembrane complex that is part of the mitochondrial electron transport chain which drives oxidative phosphorylation. Plays an important role in the uptake of multiple carbon sources such acetate, lactate, amino acids or GlcNAc present in different host niches. This Candida albicans (strain SC5314 / ATCC MYA-2876) (Yeast) protein is Cytochrome b-c1 complex subunit 7, mitochondrial.